The following is a 109-amino-acid chain: MNGLVDSSRDKKMKNPRFSFRTKSDADILDDGYRWRKYGQKSVKNSLYPRSYYRCTQHMCNVKKQVQRLSKETSIVETTYEGIHNHPCEELMQTLTPLLHQLQFLSKFT.

Positions 24 to 89 (SDADILDDGY…YEGIHNHPCE (66 aa)) form a DNA-binding region, WRKY.

It belongs to the WRKY group II-c family.

It localises to the nucleus. Functionally, transcription factor. Interacts specifically with the W box (5'-(T)TGAC[CT]-3'), a frequently occurring elicitor-responsive cis-acting element. This chain is Probable WRKY transcription factor 43 (WRKY43), found in Arabidopsis thaliana (Mouse-ear cress).